The primary structure comprises 783 residues: Endonuclease MutS2 (783 aa).

Position 333 to 340 (glycine 333 to threonine 340) interacts with ATP. One can recognise a Smr domain in the interval isoleucine 708–lysine 783.

This sequence belongs to the DNA mismatch repair MutS family. MutS2 subfamily. In terms of assembly, homodimer. Binds to stalled ribosomes, contacting rRNA.

Its function is as follows. Endonuclease that is involved in the suppression of homologous recombination and thus may have a key role in the control of bacterial genetic diversity. Acts as a ribosome collision sensor, splitting the ribosome into its 2 subunits. Detects stalled/collided 70S ribosomes which it binds and splits by an ATP-hydrolysis driven conformational change. Acts upstream of the ribosome quality control system (RQC), a ribosome-associated complex that mediates the extraction of incompletely synthesized nascent chains from stalled ribosomes and their subsequent degradation. Probably generates substrates for RQC. The sequence is that of Endonuclease MutS2 from Finegoldia magna (strain ATCC 29328 / DSM 20472 / WAL 2508) (Peptostreptococcus magnus).